A 502-amino-acid chain; its full sequence is Probable cytosol aminopeptidase (502 aa).

Residues lysine 269 and aspartate 274 each contribute to the Mn(2+) site. Residue lysine 281 is part of the active site. 3 residues coordinate Mn(2+): aspartate 292, aspartate 351, and glutamate 353. Residue arginine 355 is part of the active site.

Belongs to the peptidase M17 family. Requires Mn(2+) as cofactor.

The protein resides in the cytoplasm. The enzyme catalyses Release of an N-terminal amino acid, Xaa-|-Yaa-, in which Xaa is preferably Leu, but may be other amino acids including Pro although not Arg or Lys, and Yaa may be Pro. Amino acid amides and methyl esters are also readily hydrolyzed, but rates on arylamides are exceedingly low.. It catalyses the reaction Release of an N-terminal amino acid, preferentially leucine, but not glutamic or aspartic acids.. In terms of biological role, presumably involved in the processing and regular turnover of intracellular proteins. Catalyzes the removal of unsubstituted N-terminal amino acids from various peptides. This Vibrio parahaemolyticus serotype O3:K6 (strain RIMD 2210633) protein is Probable cytosol aminopeptidase.